A 361-amino-acid chain; its full sequence is Phospho-N-acetylmuramoyl-pentapeptide-transferase (361 aa).

The next 10 membrane-spanning stretches (helical) occupy residues 21–41 (YLTI…LMLG), 69–89 (VGTP…SILI), 93–113 (WSNI…AIGF), 131–151 (SIKF…IILI), 168–188 (IILP…IVGS), 200–220 (GLAI…AYFS), 240–260 (LFII…FNAY), 264–284 (IFMG…IAIL), 289–309 (ILLF…IIQV), and 338–358 (KIIV…LASI).

This sequence belongs to the glycosyltransferase 4 family. MraY subfamily. The cofactor is Mg(2+).

The protein resides in the cell inner membrane. It catalyses the reaction UDP-N-acetyl-alpha-D-muramoyl-L-alanyl-gamma-D-glutamyl-meso-2,6-diaminopimeloyl-D-alanyl-D-alanine + di-trans,octa-cis-undecaprenyl phosphate = di-trans,octa-cis-undecaprenyl diphospho-N-acetyl-alpha-D-muramoyl-L-alanyl-D-glutamyl-meso-2,6-diaminopimeloyl-D-alanyl-D-alanine + UMP. The protein operates within cell wall biogenesis; peptidoglycan biosynthesis. Its function is as follows. Catalyzes the initial step of the lipid cycle reactions in the biosynthesis of the cell wall peptidoglycan: transfers peptidoglycan precursor phospho-MurNAc-pentapeptide from UDP-MurNAc-pentapeptide onto the lipid carrier undecaprenyl phosphate, yielding undecaprenyl-pyrophosphoryl-MurNAc-pentapeptide, known as lipid I. The chain is Phospho-N-acetylmuramoyl-pentapeptide-transferase from Vesicomyosocius okutanii subsp. Calyptogena okutanii (strain HA).